The primary structure comprises 406 residues: Riboflavin biosynthesis protein RibBA (406 aa).

A DHBP synthase region spans residues 1–209 (MSEREEFKFN…IADLIKYRLR (209 aa)). D-ribulose 5-phosphate is bound by residues 33–34 (RE), D38, 148–152 (RAGHT), and E172. E34 is a binding site for Mg(2+). H151 is a binding site for Mg(2+). The interval 210–406 (RETLVEKVAS…VKKDKLGHMF (197 aa)) is GTP cyclohydrolase II. A GTP-binding site is contributed by 260–264 (RVHSE). The Zn(2+) site is built by C265, C276, and C278. Residues Q281, 304 to 306 (EGR), and T326 each bind GTP. Residue D338 is the Proton acceptor; for GTP cyclohydrolase activity of the active site. Catalysis depends on R340, which acts as the Nucleophile; for GTP cyclohydrolase activity. GTP is bound by residues T361 and K366.

This sequence in the N-terminal section; belongs to the DHBP synthase family. The protein in the C-terminal section; belongs to the GTP cyclohydrolase II family. The cofactor is Mg(2+). Mn(2+) is required as a cofactor. Requires Zn(2+) as cofactor.

The enzyme catalyses D-ribulose 5-phosphate = (2S)-2-hydroxy-3-oxobutyl phosphate + formate + H(+). It catalyses the reaction GTP + 4 H2O = 2,5-diamino-6-hydroxy-4-(5-phosphoribosylamino)-pyrimidine + formate + 2 phosphate + 3 H(+). The protein operates within cofactor biosynthesis; riboflavin biosynthesis; 2-hydroxy-3-oxobutyl phosphate from D-ribulose 5-phosphate: step 1/1. It functions in the pathway cofactor biosynthesis; riboflavin biosynthesis; 5-amino-6-(D-ribitylamino)uracil from GTP: step 1/4. In terms of biological role, catalyzes the conversion of D-ribulose 5-phosphate to formate and 3,4-dihydroxy-2-butanone 4-phosphate. Its function is as follows. Catalyzes the conversion of GTP to 2,5-diamino-6-ribosylamino-4(3H)-pyrimidinone 5'-phosphate (DARP), formate and pyrophosphate. This is Riboflavin biosynthesis protein RibBA from Aquifex aeolicus (strain VF5).